The sequence spans 303 residues: UDP-3-O-acyl-N-acetylglucosamine deacetylase (303 aa).

Zn(2+)-binding residues include His78, His237, and Asp241. The active-site Proton donor is His264.

The protein belongs to the LpxC family. Requires Zn(2+) as cofactor.

The enzyme catalyses a UDP-3-O-[(3R)-3-hydroxyacyl]-N-acetyl-alpha-D-glucosamine + H2O = a UDP-3-O-[(3R)-3-hydroxyacyl]-alpha-D-glucosamine + acetate. The protein operates within glycolipid biosynthesis; lipid IV(A) biosynthesis; lipid IV(A) from (3R)-3-hydroxytetradecanoyl-[acyl-carrier-protein] and UDP-N-acetyl-alpha-D-glucosamine: step 2/6. In terms of biological role, catalyzes the hydrolysis of UDP-3-O-myristoyl-N-acetylglucosamine to form UDP-3-O-myristoylglucosamine and acetate, the committed step in lipid A biosynthesis. This is UDP-3-O-acyl-N-acetylglucosamine deacetylase from Xanthomonas axonopodis pv. citri (strain 306).